The primary structure comprises 284 residues: CBY1-interacting BAR domain-containing protein 1-A (284 aa).

The N-terminal 48 residues, 1–48, are a transit peptide targeting the mitochondrion; the sequence is MSQTPEARARDNQTRQIQESVNNVEKHFGELCQIFAGYVRKTARLRDK. Residues 11 to 221 are BAR-like; sequence DNQTRQIQES…DIDEEEDLEV (211 aa). Coiled-coil stretches lie at residues 142–184 and 260–284; these read RQII…IKKL and NRQK…EDEN. Over residues 242-261 the composition is skewed to polar residues; that stretch reads SRTGSTSRGPSVISQPPGNR. A disordered region spans residues 242–284; the sequence is SRTGSTSRGPSVISQPPGNRQKNRIEDEDEEEEDDENSTEDEN. Over residues 267–284 the composition is skewed to acidic residues; it reads EDEDEEEEDDENSTEDEN.

The protein belongs to the CIBAR family.

The protein resides in the cytoplasm. The protein localises to the cytoskeleton. It localises to the microtubule organizing center. It is found in the centrosome. Its subcellular location is the centriole. The protein resides in the nucleus. The protein localises to the mitochondrion inner membrane. It localises to the cell projection. It is found in the cilium. Its subcellular location is the flagellum. Its function is as follows. Plays a critical role in regulating mitochondrial ultrastructure and function by maintaining the integrity of mitochondrial morphology, particularly the organization of cristae. Plays a crucial role in ciliogenesis. Plays a key role in the correct positioning of the annulus, a septin-based ring structure in the sperm flagellum, serving both as a physical barrier and a membrane diffusion barrier that separates the midpiece (MP) from the principal piece (PP). In Xenopus laevis (African clawed frog), this protein is CBY1-interacting BAR domain-containing protein 1-A.